The following is a 197-amino-acid chain: Imidazoleglycerol-phosphate dehydratase (197 aa).

Belongs to the imidazoleglycerol-phosphate dehydratase family.

It is found in the cytoplasm. The catalysed reaction is D-erythro-1-(imidazol-4-yl)glycerol 3-phosphate = 3-(imidazol-4-yl)-2-oxopropyl phosphate + H2O. Its pathway is amino-acid biosynthesis; L-histidine biosynthesis; L-histidine from 5-phospho-alpha-D-ribose 1-diphosphate: step 6/9. The protein is Imidazoleglycerol-phosphate dehydratase of Pseudomonas putida (strain ATCC 700007 / DSM 6899 / JCM 31910 / BCRC 17059 / LMG 24140 / F1).